A 449-amino-acid polypeptide reads, in one-letter code: Adenylosuccinate synthetase (449 aa).

GTP contacts are provided by residues Gly-37 to Lys-43 and Gly-65 to Thr-67. Asp-38 functions as the Proton acceptor in the catalytic mechanism. Mg(2+) contacts are provided by Asp-38 and Gly-65. IMP contacts are provided by residues Asp-38–Lys-41, Asn-63–His-66, Thr-155, Arg-169, Asn-247, Thr-262, and Arg-326. His-66 functions as the Proton donor in the catalytic mechanism. Val-322–Arg-328 is a binding site for substrate. Residues Arg-328, Lys-354–Asp-356, and Gly-437–Gly-439 contribute to the GTP site.

The protein belongs to the adenylosuccinate synthetase family. Homodimer. Mg(2+) serves as cofactor.

It localises to the cytoplasm. The catalysed reaction is IMP + L-aspartate + GTP = N(6)-(1,2-dicarboxyethyl)-AMP + GDP + phosphate + 2 H(+). It participates in purine metabolism; AMP biosynthesis via de novo pathway; AMP from IMP: step 1/2. Plays an important role in the de novo pathway and in the salvage pathway of purine nucleotide biosynthesis. Catalyzes the first committed step in the biosynthesis of AMP from IMP. This chain is Adenylosuccinate synthetase, found in Drosophila willistoni (Fruit fly).